The following is a 500-amino-acid chain: Protein-tyrosine sulfotransferase (500 aa).

The signal sequence occupies residues 1–24 (MQMNSVWKLSLGLLLLSSVIGSFA). Over 25–467 (ELDFGHCETL…SVLGEMGEEK (443 aa)) the chain is Lumenal. Residues Arg-121 and Glu-142 contribute to the active site. Asn-156, Asn-248, Asn-315, Asn-343, Asn-359, and Asn-395 each carry an N-linked (GlcNAc...) asparagine glycan. A helical transmembrane segment spans residues 468–488 (LWKFVPVALMLLLIVLFFLFV). Over 489–500 (NAKRRRTSKVKI) the chain is Cytoplasmic.

In terms of tissue distribution, expressed throughout the plant body, highest levels of expression are in the root apical meristem.

It localises to the golgi apparatus membrane. It carries out the reaction L-tyrosyl-[protein] + 3'-phosphoadenylyl sulfate = O-sulfo-L-tyrosine-[protein] + adenosine 3',5'-bisphosphate + H(+). In terms of biological role, catalyzes the O-sulfation of tyrosine residues within acidic motifs of polypeptides. In Arabidopsis thaliana (Mouse-ear cress), this protein is Protein-tyrosine sulfotransferase (TPST).